Consider the following 213-residue polypeptide: ATP phosphoribosyltransferase (213 aa).

This sequence belongs to the ATP phosphoribosyltransferase family. Short subfamily. Heteromultimer composed of HisG and HisZ subunits.

It is found in the cytoplasm. The catalysed reaction is 1-(5-phospho-beta-D-ribosyl)-ATP + diphosphate = 5-phospho-alpha-D-ribose 1-diphosphate + ATP. The protein operates within amino-acid biosynthesis; L-histidine biosynthesis; L-histidine from 5-phospho-alpha-D-ribose 1-diphosphate: step 1/9. Functionally, catalyzes the condensation of ATP and 5-phosphoribose 1-diphosphate to form N'-(5'-phosphoribosyl)-ATP (PR-ATP). Has a crucial role in the pathway because the rate of histidine biosynthesis seems to be controlled primarily by regulation of HisG enzymatic activity. This chain is ATP phosphoribosyltransferase, found in Saccharophagus degradans (strain 2-40 / ATCC 43961 / DSM 17024).